A 409-amino-acid chain; its full sequence is Astacin-like metalloendopeptidase (409 aa).

The N-terminal stretch at 1–19 is a signal peptide; the sequence is MDLKMLLIFIAFLLPSVLG. Positions 30-39 are enriched in low complexity; sequence TATTESTQVT. The disordered stretch occupies residues 30–54; it reads TATTESTQVTTEEDIYDSPSPAETD. In terms of domain architecture, Peptidase M12A spans 87–285; sequence SAINCRNCYW…AKINRLYNCS (199 aa). 5 disulfides stabilise this stretch: Cys-91–Cys-94, Cys-134–Cys-284, Cys-155–Cys-175, Cys-287–Cys-313, and Cys-339–Cys-362. Residue His-183 coordinates Zn(2+). The active site involves Glu-184. Residues His-187 and His-193 each coordinate Zn(2+). The CUB domain occupies 287 to 399; the sequence is CSTIIDAAFG…SGFQATFTSA (113 aa).

Zn(2+) serves as cofactor. As to expression, expressed in ovary and gonads.

The protein localises to the cytoplasm. It localises to the cell membrane. It is found in the cytoplasmic vesicle. The protein resides in the secretory vesicle. Its subcellular location is the cortical granule. Probable oocyte-specific oolemmal receptor involved in sperm and egg adhesion and fertilization. May act as a protease. This chain is Astacin-like metalloendopeptidase (ASTL), found in Gallus gallus (Chicken).